A 380-amino-acid polypeptide reads, in one-letter code: Cyclohexane-1-carbonyl-CoA dehydrogenase (380 aa).

It belongs to the acyl-CoA dehydrogenase family. In terms of assembly, homotetramer. The cofactor is FAD.

It carries out the reaction cyclohexane-1-carbonyl-CoA + oxidized [electron-transfer flavoprotein] + H(+) = cyclohex-1-ene-1-carbonyl-CoA + reduced [electron-transfer flavoprotein]. Functionally, acyl-CoA dehydrogenase involved in the anaerobic degradation of cyclohexane carboxylic acid (CHC). Catalyzes the 1,2-dehydrogenation of cyclohexane-1-carbonyl-CoA (CHCoA) to cyclohex-1-ene-1-carbonyl-CoA (CHeneCoA). An alternative substrate, cyclohex-3-ene-1-carboxyl-CoA can be converted to the corresponding cyclohexadiene-1-carboxyl-CoA isomers (30% rate compared to CHC). The chain is Cyclohexane-1-carbonyl-CoA dehydrogenase from Geobacter metallireducens (strain ATCC 53774 / DSM 7210 / GS-15).